Here is an 87-residue protein sequence, read N- to C-terminus: U3-theraphotoxin-Hhn1f (87 aa).

Residues 1-24 form the signal peptide; it reads MVNMKASMFLTSAGLVLLFVVCYA. A propeptide spanning residues 25-52 is cleaved from the precursor; the sequence is SESEEKEFPKEMLSSIFAVDNDFKQEER. 3 disulfide bridges follow: C54/C67, C61/C72, and C66/C79.

This sequence belongs to the neurotoxin 10 (Hwtx-1) family. 51 (Hntx-8) subfamily. Hntx-8 sub-subfamily. As to expression, expressed by the venom gland.

Its subcellular location is the secreted. Its function is as follows. Ion channel inhibitor. The chain is U3-theraphotoxin-Hhn1f from Cyriopagopus hainanus (Chinese bird spider).